Here is a 403-residue protein sequence, read N- to C-terminus: Ribosomal RNA large subunit methyltransferase I (403 aa).

A PUA domain is found at 9–86; sequence YPRLVLSKGR…KAESIDIAFF (78 aa).

It belongs to the methyltransferase superfamily. RlmI family.

It is found in the cytoplasm. The catalysed reaction is cytidine(1962) in 23S rRNA + S-adenosyl-L-methionine = 5-methylcytidine(1962) in 23S rRNA + S-adenosyl-L-homocysteine + H(+). Functionally, specifically methylates the cytosine at position 1962 (m5C1962) of 23S rRNA. The protein is Ribosomal RNA large subunit methyltransferase I of Salmonella gallinarum (strain 287/91 / NCTC 13346).